Consider the following 295-residue polypeptide: ATP synthase gamma chain (295 aa).

It belongs to the ATPase gamma chain family. As to quaternary structure, F-type ATPases have 2 components, CF(1) - the catalytic core - and CF(0) - the membrane proton channel. CF(1) has five subunits: alpha(3), beta(3), gamma(1), delta(1), epsilon(1). CF(0) has three main subunits: a, b and c.

Its subcellular location is the cell inner membrane. Produces ATP from ADP in the presence of a proton gradient across the membrane. The gamma chain is believed to be important in regulating ATPase activity and the flow of protons through the CF(0) complex. The sequence is that of ATP synthase gamma chain from Paraburkholderia phymatum (strain DSM 17167 / CIP 108236 / LMG 21445 / STM815) (Burkholderia phymatum).